A 254-amino-acid chain; its full sequence is Mamu class II histocompatibility antigen, DR alpha chain (254 aa).

A signal peptide spans 1-25 (MAESGVPVLGFFIIAVLMSAQESWA). The alpha-1 stretch occupies residues 26–109 (IKEEHVIIQA…KRSNNTPITN (84 aa)). At 26 to 216 (IKEEHVIIQA…APSPLPETTE (191 aa)) the chain is on the extracellular side. Asn-103 carries N-linked (GlcNAc...) asparagine glycosylation. Residues 110–203 (VPPEVTVLTN…CLDAPLLKHW (94 aa)) are alpha-2. The Ig-like C1-type domain maps to 112 to 204 (PEVTVLTNSP…LDAPLLKHWE (93 aa)). Cys-132 and Cys-188 are joined by a disulfide. Residues 204–216 (EFDAPSPLPETTE) form a connecting peptide region. A helical transmembrane segment spans residues 217-239 (NVVCALGLIVGLVGIIVGTVFII). Topologically, residues 240 to 254 (KGVRKSNAAERRGPL) are cytoplasmic. Lys-244 participates in a covalent cross-link: Glycyl lysine isopeptide (Lys-Gly) (interchain with G-Cter in ubiquitin).

Belongs to the MHC class II family. In terms of assembly, heterodimer of an alpha chain and a beta chain.

The protein localises to the membrane. The protein is Mamu class II histocompatibility antigen, DR alpha chain (Mamu-DRA) of Macaca mulatta (Rhesus macaque).